Consider the following 260-residue polypeptide: Beta-lactamase SHV-6 (260 aa).

Positions 1–11 (LLATLPLAVHA) are cleaved as a signal peptide. Ser-56 acts as the Acyl-ester intermediate in catalysis. Cys-63 and Cys-109 form a disulfide bridge. Residue Glu-154 is the Proton acceptor of the active site. 220-222 (KTG) serves as a coordination point for substrate.

This sequence belongs to the class-A beta-lactamase family.

It carries out the reaction a beta-lactam + H2O = a substituted beta-amino acid. In terms of biological role, SHV enzymes hydrolyze broad spectrum cephalosporins notably cefotaxime and ceftazidime. This is Beta-lactamase SHV-6 (bla) from Klebsiella pneumoniae.